A 102-amino-acid polypeptide reads, in one-letter code: Small ribosomal subunit protein uS10 (102 aa).

This sequence belongs to the universal ribosomal protein uS10 family. As to quaternary structure, part of the 30S ribosomal subunit.

Involved in the binding of tRNA to the ribosomes. This is Small ribosomal subunit protein uS10 from Planobispora rosea.